The following is a 778-amino-acid chain: Jhy protein homolog (778 aa).

Disordered regions lie at residues 62 to 271, 334 to 408, 631 to 654, and 721 to 746; these read DRIR…PKTD, QYES…LDTS, EKGKKHKKRSSSKNTKLKGYQKRD, and IPKPKPSNLTHQASKEQKNPTYAGKE. Residues 118-139 are compositionally biased toward basic and acidic residues; the sequence is PIEDKYSDLRYDPNWKSKKEEG. Residues 223-234 show a composition bias toward low complexity; sequence SSLSPYVKSSSS. Residues 334 to 344 show a composition bias toward polar residues; the sequence is QYESTKSSNVP. A compositionally biased stretch (basic residues) spans 358-371; that stretch reads SRRPAKLKIRKQCK. Residues 375 to 389 are compositionally biased toward polar residues; that stretch reads GLKSSTTEEVTASQG. The segment covering 390–402 has biased composition (low complexity); the sequence is NQNNPPRQQQNQN. Basic residues predominate over residues 633–650; that stretch reads GKKHKKRSSSKNTKLKGY. A compositionally biased stretch (basic and acidic residues) spans 733 to 746; sequence ASKEQKNPTYAGKE.

Required for the normal development of cilia in brain ependymal cells lining the ventricular surfaces. The protein is Jhy protein homolog of Homo sapiens (Human).